We begin with the raw amino-acid sequence, 388 residues long: Chorismate synthase (388 aa).

NADP(+) contacts are provided by Arg-39 and Arg-45. Residues 130-132 (RSS), 251-252 (NA), Ala-296, 311-315 (KPIPT), and Arg-337 each bind FMN.

The protein belongs to the chorismate synthase family. Homotetramer. FMNH2 serves as cofactor.

The enzyme catalyses 5-O-(1-carboxyvinyl)-3-phosphoshikimate = chorismate + phosphate. The protein operates within metabolic intermediate biosynthesis; chorismate biosynthesis; chorismate from D-erythrose 4-phosphate and phosphoenolpyruvate: step 7/7. Catalyzes the anti-1,4-elimination of the C-3 phosphate and the C-6 proR hydrogen from 5-enolpyruvylshikimate-3-phosphate (EPSP) to yield chorismate, which is the branch point compound that serves as the starting substrate for the three terminal pathways of aromatic amino acid biosynthesis. This reaction introduces a second double bond into the aromatic ring system. The sequence is that of Chorismate synthase from Streptococcus equi subsp. zooepidemicus (strain MGCS10565).